The following is a 229-amino-acid chain: Protein-L-isoaspartate O-methyltransferase (229 aa).

Ser-78 is an active-site residue.

It belongs to the methyltransferase superfamily. L-isoaspartyl/D-aspartyl protein methyltransferase family.

It localises to the cytoplasm. It catalyses the reaction [protein]-L-isoaspartate + S-adenosyl-L-methionine = [protein]-L-isoaspartate alpha-methyl ester + S-adenosyl-L-homocysteine. Its function is as follows. Catalyzes the methyl esterification of L-isoaspartyl residues in peptides and proteins that result from spontaneous decomposition of normal L-aspartyl and L-asparaginyl residues. It plays a role in the repair and/or degradation of damaged proteins. The polypeptide is Protein-L-isoaspartate O-methyltransferase (Chromohalobacter salexigens (strain ATCC BAA-138 / DSM 3043 / CIP 106854 / NCIMB 13768 / 1H11)).